Reading from the N-terminus, the 468-residue chain is UDP-N-acetylmuramate--L-alanine ligase (468 aa).

Residue 112–118 (GMHGKTT) participates in ATP binding.

It belongs to the MurCDEF family.

Its subcellular location is the cytoplasm. It carries out the reaction UDP-N-acetyl-alpha-D-muramate + L-alanine + ATP = UDP-N-acetyl-alpha-D-muramoyl-L-alanine + ADP + phosphate + H(+). Its pathway is cell wall biogenesis; peptidoglycan biosynthesis. Cell wall formation. This is UDP-N-acetylmuramate--L-alanine ligase from Koribacter versatilis (strain Ellin345).